A 346-amino-acid polypeptide reads, in one-letter code: UPF0283 membrane protein VIBHAR_01918 (346 aa).

The span at Met-1–Ser-17 shows a compositional bias: basic and acidic residues. A disordered region spans residues Met-1–Thr-28. 2 helical membrane passes run Leu-73–Ile-93 and Trp-98–Leu-118.

The protein belongs to the UPF0283 family.

It is found in the cell inner membrane. The sequence is that of UPF0283 membrane protein VIBHAR_01918 from Vibrio campbellii (strain ATCC BAA-1116).